The sequence spans 190 residues: Peptidyl-prolyl cis-trans isomerase FKBP20-1 (190 aa).

Position 2 is an N-acetylglycine (G2). Positions 32-121 constitute a PPIase FKBP-type domain; it reads LPVVDVHYEG…IFEVELVACR (90 aa). A compositionally biased stretch (basic and acidic residues) spans 149 to 163; the sequence is AAAKEDDKKKREEAK. A disordered region spans residues 149–190; the sequence is AAAKEDDKKKREEAKAAAAARIQAKLDAKKGPGKGKGKGKAK. Basic residues predominate over residues 179-190; it reads GPGKGKGKGKAK.

It belongs to the FKBP-type PPIase family.

It carries out the reaction [protein]-peptidylproline (omega=180) = [protein]-peptidylproline (omega=0). Functionally, PPIases accelerate the folding of proteins. It catalyzes the cis-trans isomerization of proline imidic peptide bonds in oligopeptides. The chain is Peptidyl-prolyl cis-trans isomerase FKBP20-1 (FKBP20-1) from Arabidopsis thaliana (Mouse-ear cress).